A 501-amino-acid chain; its full sequence is MSDQQLDQHELQQEENKLIAQRKEKLAAVREARAIAFPNDFRRDAYFADLQKQYADKTKEELEAAAIPVKVAGRIMLNRGSFIVLQDSSERLQVYVNRKTLPEETLAEIKTWDLGDIIGAEGVLARSGKGDLYVDMTSVRLLTKSLRPLPDKHHGLTDTEQRYRQRYVDLMVNEETRHTFRVRSQVIAHIRRFLSERGFLEVETPMLQTIPGGAAAKPFETHHNALDMAMFLRIAPELYLKRLVVGGFEKVFEINRNFRNEGVSTRHNPEFTMLEFYQAYADYEDNMDLTEELFRELAQAVLGTTDVPYGDKVFHFGEPFVRLSVFDSILKYNPEISAADLNDVEKARAIAKKAGAKVLGHEGLGKLQVMIFEELVEHKLEQPHFITRYPFEVSPLARRNDEDPSVTDRFELFIGGREIANAYSELNDAEDQAERFMLQVKEKDAGDDEAMHYDADFINALEYGMPPTAGEGIGIDRLVMLLTNSPSIRDVILFPHMRPQA.

Mg(2+) is bound by residues E411 and E418.

The protein belongs to the class-II aminoacyl-tRNA synthetase family. As to quaternary structure, homodimer. It depends on Mg(2+) as a cofactor.

Its subcellular location is the cytoplasm. It catalyses the reaction tRNA(Lys) + L-lysine + ATP = L-lysyl-tRNA(Lys) + AMP + diphosphate. The polypeptide is Lysine--tRNA ligase (Pseudomonas aeruginosa (strain UCBPP-PA14)).